The primary structure comprises 570 residues: Phytoene desaturase (570 aa).

The helical transmembrane segment at 547–567 (LFQGFLGALVAILLAYYYLVI) threads the bilayer.

This sequence belongs to the carotenoid/retinoid oxidoreductase family. The cofactor is NAD(+).

It localises to the membrane. It carries out the reaction 15-cis-phytoene + A = all-trans-phytofluene + AH2. It catalyses the reaction all-trans-phytofluene + A = all-trans-zeta-carotene + AH2. The enzyme catalyses all-trans-zeta-carotene + A = all-trans-neurosporene + AH2. The catalysed reaction is all-trans-neurosporene + A = all-trans-lycopene + AH2. Its pathway is carotenoid biosynthesis. Phytoene desaturase; part of the car gene cluster that mediates the biosynthesis of neurosporaxanthin, a carboxylic apocarotenoid acting as an essential protective pigments and leading to orange pigmentation. Converts phytoene into lycopene via the intermediates phytofluene, zeta-carotene and neurosporene; and further desaturates gamma-carotene into torulene. Neurosporaxanthin is synthesized from geranyl-geranyl pyrophosphate (GGPP) through several enzymatic activities. Phytoene synthase activity performed by the bifunctional enzyme carAR first produces phytoene from geranyl-geranyl pyrophosphate (GGPP). The phytoene dehydrogenase carB then introduces 4 desaturations to lead to lycopene which is substrate of the carotene cyclase activity of carAR that leads to the production of gamma-carotene. CarB then performs a 5th desaturation reaction to yield torulene. Torulene is the substrate of the dioxidase carT that breaks the molecule, removing five carbon atoms to yield beta-apo-4'-carotenal, whereas the aldehyde dehydrogenase carD mediates the last step by converting beta-apo-4'-carotenal into neurosporaxanthin. This chain is Phytoene desaturase, found in Fusarium fujikuroi (Bakanae and foot rot disease fungus).